The sequence spans 340 residues: MKKKLLVLTMSTLFATQLINSNHAKASVTESVDKKFVVPESGINKIIPAYDEFKNSPKVNVSNLTDNKNFVVSEDKLNKIVDSSAASKIVDKNFAVPESKLGNIVPEYKEINNRVNVATNNPASQQVDKHFVAKGPEVNRFITQNKVNHHFITTQTHYKKVITSYKSTHVHKHVNHAKDSINKHFIVKPSESPRYTHPSQSLIIKHHFAVPGYHAHKFVTPGHASIKINHFCVVPQINSFKVIPPYGHNSHRMHVPSFQNNTTATHQNAKVNKAYDYKYFYSYKVVKGVKKYFSFSQSNGYKIGKPSLNIKNVNYQYAVPSYSPTHYVPEFKGSLPAPRV.

Positions 1–26 (MKKKLLVLTMSTLFATQLINSNHAKA) are cleaved as a signal peptide.

Its subcellular location is the cell surface. Adhesin that binds to the host cell extracellular matrix proteins fibronectin, fibrinogen, collagen, and vitronectin. The chain is Extracellular matrix protein-binding protein emp (emp) from Staphylococcus aureus (strain Mu50 / ATCC 700699).